The sequence spans 305 residues: Insulin-like growth factor-binding protein 2 (305 aa).

Residues 1-34 form the signal peptide; sequence MLPRLGGPALPLLLPSLLLLLLLGAGGCGPGVRA. The IGFBP N-terminal domain occupies 36–118; it reads VLFRCPPCTP…VTGAGTCEKR (83 aa). Intrachain disulfides connect cysteine 40–cysteine 68, cysteine 43–cysteine 70, cysteine 51–cysteine 71, cysteine 59–cysteine 74, cysteine 82–cysteine 95, cysteine 89–cysteine 115, cysteine 207–cysteine 241, cysteine 252–cysteine 263, and cysteine 265–cysteine 286. The Thyroglobulin type-1 domain maps to 204–286; sequence RTPCQQELDQ…APTIRGDPEC (83 aa). Positions 281–283 match the Cell attachment site motif; that stretch reads RGD.

As to quaternary structure, interacts with IGF1. Interacts with IGF2. Interacts (via RGD motif) with integrin alpha5/ITGA5; this interaction induces cell migration, adhesion or apoptosis according to the context. Interacts with PTPRB; this interaction leads to PTPRB dimerization and inactivation. In terms of processing, cleaved by MMP9 leading to release of free IGF2 from IGFBP2-IGF2 complex, which contributes to enhance the motility and the growth of astrocytes. O-glycosylated. In terms of tissue distribution, highly expressed in adult liver, but also in kidney, lung, brain, spleen, testis and ovary.

It is found in the secreted. Its function is as follows. Multifunctional protein that plays a critical role in regulating the availability of IGFs such as IGF1 and IGF2 to their receptors and thereby regulates IGF-mediated cellular processes including proliferation, differentiation, and apoptosis in a cell-type specific manner. Functions coordinately with receptor protein tyrosine phosphatase beta/PTPRB and the IGF1 receptor to regulate IGF1-mediated signaling by stimulating the phosphorylation of PTEN leading to its inactivation and AKT1 activation. Plays a positive role in cell migration via interaction with integrin alpha5/ITGA5 through an RGD motif. Additionally, interaction with ITGA5/ITGB1 enhances the adhesion of endothelial progenitor cells to endothelial cells. Upon mitochondrial damage, facilitates apoptosis with ITGA5 of podocytes, and then activates the phosphorylation of focal adhesion kinase (FAK)-mediated mitochondrial injury. This is Insulin-like growth factor-binding protein 2 (Igfbp2) from Mus musculus (Mouse).